The sequence spans 150 residues: 3-hydroxyacyl-[acyl-carrier-protein] dehydratase FabZ (150 aa).

The active site involves H51.

It belongs to the thioester dehydratase family. FabZ subfamily.

It localises to the cytoplasm. The catalysed reaction is a (3R)-hydroxyacyl-[ACP] = a (2E)-enoyl-[ACP] + H2O. Functionally, involved in unsaturated fatty acids biosynthesis. Catalyzes the dehydration of short chain beta-hydroxyacyl-ACPs and long chain saturated and unsaturated beta-hydroxyacyl-ACPs. This is 3-hydroxyacyl-[acyl-carrier-protein] dehydratase FabZ from Geobacter sulfurreducens (strain ATCC 51573 / DSM 12127 / PCA).